Consider the following 386-residue polypeptide: Probable pectin lyase E (386 aa).

An N-terminal signal peptide occupies residues Met-1 to Ala-16. Cys-77 and Cys-101 are oxidised to a cystine. A glycan (N-linked (GlcNAc...) asparagine) is linked at Asn-124. Arg-251 is an active-site residue. A disulfide bond links Cys-326 and Cys-334.

The protein belongs to the polysaccharide lyase 1 family.

It localises to the secreted. The enzyme catalyses Eliminative cleavage of (1-&gt;4)-alpha-D-galacturonan methyl ester to give oligosaccharides with 4-deoxy-6-O-methyl-alpha-D-galact-4-enuronosyl groups at their non-reducing ends.. Functionally, pectinolytic enzymes consist of four classes of enzymes: pectin lyase, polygalacturonase, pectin methylesterase and rhamnogalacturonase. Among pectinolytic enzymes, pectin lyase is the most important in depolymerization of pectin, since it cleaves internal glycosidic bonds of highly methylated pectins. This chain is Probable pectin lyase E (pelE), found in Aspergillus fumigatus (strain CBS 144.89 / FGSC A1163 / CEA10) (Neosartorya fumigata).